The chain runs to 157 residues: Protein Smg (157 aa).

It belongs to the Smg family.

This Yersinia pestis (strain Pestoides F) protein is Protein Smg.